Reading from the N-terminus, the 201-residue chain is 8-oxoguanine DNA glycosylase/AP lyase (201 aa).

Active-site residues include K126 and D144.

This sequence belongs to the type-2 OGG1 family.

It carries out the reaction 2'-deoxyribonucleotide-(2'-deoxyribose 5'-phosphate)-2'-deoxyribonucleotide-DNA = a 3'-end 2'-deoxyribonucleotide-(2,3-dehydro-2,3-deoxyribose 5'-phosphate)-DNA + a 5'-end 5'-phospho-2'-deoxyribonucleoside-DNA + H(+). Catalyzes the excision of an oxidatively damaged form of guanine (7,8-dihydro-8-oxoguanine = 8-oxoG) from DNA. Also cleaves the DNA backbone at apurinic/apyrimidinic sites (AP sites). In Metallosphaera sedula (strain ATCC 51363 / DSM 5348 / JCM 9185 / NBRC 15509 / TH2), this protein is 8-oxoguanine DNA glycosylase/AP lyase.